The sequence spans 339 residues: Transcription factor IIIA (339 aa).

9 C2H2-type zinc fingers span residues Phe12 to His36, Phe42 to His66, Cys72 to His97, Tyr104 to His128, Phe134 to His158, Tyr161 to His187, Val190 to His212, Tyr219 to His244, and Phe250 to His274. The segment at Phe271 to Lys339 is disordered. The span at Lys299–Pro309 shows a compositional bias: basic residues. A compositionally biased stretch (polar residues) spans Gln311–Asp323.

The protein resides in the nucleus. Functionally, involved in ribosomal large subunit biogenesis. Interacts with the internal control region (ICR) of approximately 50 bases within the 5S RNA genes, is required for correct transcription of these genes by RNA polymerase III. Also binds the transcribed 5S RNA's. The sequence is that of Transcription factor IIIA (gtf3a) from Anaxyrus americanus (American toad).